The following is a 201-amino-acid chain: Thymidine kinase (201 aa).

ATP is bound by residues 9-16 (SAMNAGKS) and 87-90 (DECH). The active-site Proton acceptor is Glu88. Residues Cys145, Cys147, Cys182, and His185 each contribute to the Zn(2+) site.

This sequence belongs to the thymidine kinase family. In terms of assembly, homotetramer.

The protein resides in the cytoplasm. The enzyme catalyses thymidine + ATP = dTMP + ADP + H(+). The polypeptide is Thymidine kinase (Photorhabdus laumondii subsp. laumondii (strain DSM 15139 / CIP 105565 / TT01) (Photorhabdus luminescens subsp. laumondii)).